A 314-amino-acid polypeptide reads, in one-letter code: Cytosolic sulfotransferase 3 (314 aa).

71 to 76 lines the 3'-phosphoadenylyl sulfate pocket; the sequence is KSGTLW. The Proton acceptor role is filled by H121. 3'-phosphoadenylyl sulfate-binding positions include R143, S151, Y209, and 275–277; that span reads RKG.

The protein belongs to the sulfotransferase 1 family.

It localises to the cytoplasm. Sulfotransferase that utilizes 3'-phospho-5'-adenylyl sulfate (PAPS) as sulfonate donor. The polypeptide is Cytosolic sulfotransferase 3 (SOT3) (Arabidopsis thaliana (Mouse-ear cress)).